Reading from the N-terminus, the 191-residue chain is Large ribosomal subunit protein bL9 (191 aa).

The segment at 149-191 is disordered; the sequence is EEAERQSKGESLTSADAIYGVDEDALRPEDFFDPEADGNEDDE. Residues 179-191 are compositionally biased toward acidic residues; that stretch reads FFDPEADGNEDDE.

Belongs to the bacterial ribosomal protein bL9 family.

In terms of biological role, binds to the 23S rRNA. This Agrobacterium fabrum (strain C58 / ATCC 33970) (Agrobacterium tumefaciens (strain C58)) protein is Large ribosomal subunit protein bL9 (rplI).